A 225-amino-acid chain; its full sequence is Uracil-DNA glycosylase (225 aa).

Catalysis depends on Asp-65, which acts as the Proton acceptor.

This sequence belongs to the uracil-DNA glycosylase (UDG) superfamily. UNG family.

The protein resides in the cytoplasm. It catalyses the reaction Hydrolyzes single-stranded DNA or mismatched double-stranded DNA and polynucleotides, releasing free uracil.. Its function is as follows. Excises uracil residues from the DNA which can arise as a result of misincorporation of dUMP residues by DNA polymerase or due to deamination of cytosine. The sequence is that of Uracil-DNA glycosylase from Bacillus cereus (strain AH187).